The chain runs to 402 residues: F-box protein At4g22390 (402 aa).

In terms of domain architecture, F-box spans 1–49 (MAECPTDLINEMFLRLRATTLVKCRVLSKPCFSLIDSPEFVSSHLRRRL).

The protein is F-box protein At4g22390 of Arabidopsis thaliana (Mouse-ear cress).